A 97-amino-acid polypeptide reads, in one-letter code: Biogenesis of lysosome-related organelles complex 1 subunit SNN1 (97 aa).

The stretch at V45 to V97 forms a coiled coil.

Belongs to the SNAPIN family. As to quaternary structure, component of the biogenesis of lysosome-related organelles complex-1 (BLOC-1).

Its subcellular location is the endosome. Its function is as follows. Component of the biogenesis of lysosome-related organelles complex-1 (BLOC-1), a complex involved in endosomal cargo sorting. The sequence is that of Biogenesis of lysosome-related organelles complex 1 subunit SNN1 (SNN1) from Lachancea thermotolerans (strain ATCC 56472 / CBS 6340 / NRRL Y-8284) (Yeast).